A 248-amino-acid chain; its full sequence is Pulmonary surfactant-associated protein A (248 aa).

The first 20 residues, 1–20 (MSLCSLAFTLFLTVVAGIKC), serve as a signal peptide directing secretion. The Collagen-like domain maps to 28–100 (GSPGIPGAPG…PGERGLPGFP (73 aa)). Proline 30, proline 33, proline 36, proline 42, proline 54, proline 57, proline 63, proline 67, proline 70, and proline 76 each carry 4-hydroxyproline. The interval 31–99 (GIPGAPGNHG…EPGERGLPGF (69 aa)) is disordered. A compositionally biased stretch (basic and acidic residues) spans 42-51 (PGRDGRDGVK). The segment covering 54–65 (PGPPGPMGPPGG) has biased composition (pro residues). Residues 69–82 (LPGRDGLPGAPGAP) are compositionally biased toward low complexity. The span at 84 to 93 (ERGDKGEPGE) shows a compositional bias: basic and acidic residues. Positions 133-248 (SVGDKVFSTN…LQYRLAVCEF (116 aa)) constitute a C-type lectin domain. 2 disulfides stabilise this stretch: cysteine 155-cysteine 246 and cysteine 224-cysteine 238. A glycan (N-linked (GlcNAc...) asparagine) is linked at asparagine 207. Glutamate 215, arginine 217, asparagine 234, and aspartate 235 together coordinate Ca(2+).

The protein belongs to the SFTPA family. As to quaternary structure, oligomeric complex of 6 set of homotrimers.

The protein resides in the secreted. It is found in the extracellular space. The protein localises to the extracellular matrix. It localises to the surface film. Functionally, in presence of calcium ions, it binds to surfactant phospholipids and contributes to lower the surface tension at the air-liquid interface in the alveoli of the mammalian lung and is essential for normal respiration. Enhances the expression of MYO18A/SP-R210 on alveolar macrophages. The protein is Pulmonary surfactant-associated protein A (Sftpa1) of Rattus norvegicus (Rat).